The primary structure comprises 594 residues: Proline--tRNA ligase (594 aa).

Belongs to the class-II aminoacyl-tRNA synthetase family. ProS type 1 subfamily. Homodimer.

It localises to the cytoplasm. The enzyme catalyses tRNA(Pro) + L-proline + ATP = L-prolyl-tRNA(Pro) + AMP + diphosphate. Its function is as follows. Catalyzes the attachment of proline to tRNA(Pro) in a two-step reaction: proline is first activated by ATP to form Pro-AMP and then transferred to the acceptor end of tRNA(Pro). As ProRS can inadvertently accommodate and process non-cognate amino acids such as alanine and cysteine, to avoid such errors it has two additional distinct editing activities against alanine. One activity is designated as 'pretransfer' editing and involves the tRNA(Pro)-independent hydrolysis of activated Ala-AMP. The other activity is designated 'posttransfer' editing and involves deacylation of mischarged Ala-tRNA(Pro). The misacylated Cys-tRNA(Pro) is not edited by ProRS. The protein is Proline--tRNA ligase of Synechococcus sp. (strain WH7803).